A 232-amino-acid chain; its full sequence is Orotidine 5'-phosphate decarboxylase (232 aa).

Residues aspartate 13, lysine 35, 62–71, threonine 122, arginine 182, glutamine 191, glycine 211, and arginine 212 contribute to the substrate site; that span reads DLKFHDIPNT. Residue lysine 64 is the Proton donor of the active site.

Belongs to the OMP decarboxylase family. Type 1 subfamily. In terms of assembly, homodimer.

It catalyses the reaction orotidine 5'-phosphate + H(+) = UMP + CO2. Its pathway is pyrimidine metabolism; UMP biosynthesis via de novo pathway; UMP from orotate: step 2/2. In terms of biological role, catalyzes the decarboxylation of orotidine 5'-monophosphate (OMP) to uridine 5'-monophosphate (UMP). This is Orotidine 5'-phosphate decarboxylase from Pseudomonas savastanoi pv. phaseolicola (strain 1448A / Race 6) (Pseudomonas syringae pv. phaseolicola (strain 1448A / Race 6)).